The chain runs to 377 residues: RING finger protein 215 (377 aa).

Residues 1-22 (MGPAARPALRSPPPPPPPPPSP) are Cytoplasmic-facing. The segment at 1–22 (MGPAARPALRSPPPPPPPPPSP) is disordered. Positions 10-22 (RSPPPPPPPPPSP) are enriched in pro residues. The helical transmembrane segment at 23-43 (LLLLLPLLPLWLGLAGPGAAA) threads the bilayer. The Extracellular portion of the chain corresponds to 44–250 (DGSEPAAGAG…GGSRAQEQKP (207 aa)). Asparagine 186 is a glycosylation site (N-linked (GlcNAc...) asparagine). A helical membrane pass occupies residues 251 to 271 (LQQLWNAILLVAMLLCTGLVV). Over 272 to 377 (QAQRQASRQS…NVLGNRYSDD (106 aa)) the chain is Cytoplasmic. The RING-type; atypical zinc-finger motif lies at 325–366 (CAVCLDYFCNKQWLRVLPCKHEFHRDCVDPWLMLQQTCPLCK).

The protein resides in the membrane. This is RING finger protein 215 (RNF215) from Homo sapiens (Human).